Here is a 315-residue protein sequence, read N- to C-terminus: Lipoyl synthase (315 aa).

Residues C62, C67, C73, C88, C92, C95, and S302 each coordinate [4Fe-4S] cluster. In terms of domain architecture, Radical SAM core spans 74 to 291 (FGKGTATFMI…ETEALAMGFK (218 aa)).

The protein belongs to the radical SAM superfamily. Lipoyl synthase family. [4Fe-4S] cluster is required as a cofactor.

It is found in the cytoplasm. The catalysed reaction is [[Fe-S] cluster scaffold protein carrying a second [4Fe-4S](2+) cluster] + N(6)-octanoyl-L-lysyl-[protein] + 2 oxidized [2Fe-2S]-[ferredoxin] + 2 S-adenosyl-L-methionine + 4 H(+) = [[Fe-S] cluster scaffold protein] + N(6)-[(R)-dihydrolipoyl]-L-lysyl-[protein] + 4 Fe(3+) + 2 hydrogen sulfide + 2 5'-deoxyadenosine + 2 L-methionine + 2 reduced [2Fe-2S]-[ferredoxin]. It functions in the pathway protein modification; protein lipoylation via endogenous pathway; protein N(6)-(lipoyl)lysine from octanoyl-[acyl-carrier-protein]: step 2/2. Catalyzes the radical-mediated insertion of two sulfur atoms into the C-6 and C-8 positions of the octanoyl moiety bound to the lipoyl domains of lipoate-dependent enzymes, thereby converting the octanoylated domains into lipoylated derivatives. The sequence is that of Lipoyl synthase from Aromatoleum aromaticum (strain DSM 19018 / LMG 30748 / EbN1) (Azoarcus sp. (strain EbN1)).